The sequence spans 550 residues: CTP synthase (550 aa).

The interval 1 to 270 (MTKYVFVTGG…DRIICEELKL (270 aa)) is amidoligase domain. Ser-13 is a CTP binding site. Ser-13 is a binding site for UTP. ATP contacts are provided by residues 14 to 19 (SLGKGI) and Asp-71. Residues Asp-71 and Glu-144 each contribute to the Mg(2+) site. Residues 151 to 153 (DIE), 191 to 196 (KTKPTQ), and Lys-227 contribute to the CTP site. UTP contacts are provided by residues 191 to 196 (KTKPTQ) and Lys-227. In terms of domain architecture, Glutamine amidotransferase type-1 spans 295–547 (TIGMVGKYVD…VEAALANKQA (253 aa)). Gly-356 provides a ligand contact to L-glutamine. Cys-383 serves as the catalytic Nucleophile; for glutamine hydrolysis. L-glutamine-binding positions include 384-387 (LGMQ), Glu-407, and Arg-473. Residues His-520 and Glu-522 contribute to the active site.

It belongs to the CTP synthase family. In terms of assembly, homotetramer.

It catalyses the reaction UTP + L-glutamine + ATP + H2O = CTP + L-glutamate + ADP + phosphate + 2 H(+). It carries out the reaction L-glutamine + H2O = L-glutamate + NH4(+). The catalysed reaction is UTP + NH4(+) + ATP = CTP + ADP + phosphate + 2 H(+). It participates in pyrimidine metabolism; CTP biosynthesis via de novo pathway; CTP from UDP: step 2/2. Allosterically activated by GTP, when glutamine is the substrate; GTP has no effect on the reaction when ammonia is the substrate. The allosteric effector GTP functions by stabilizing the protein conformation that binds the tetrahedral intermediate(s) formed during glutamine hydrolysis. Inhibited by the product CTP, via allosteric rather than competitive inhibition. Functionally, catalyzes the ATP-dependent amination of UTP to CTP with either L-glutamine or ammonia as the source of nitrogen. Regulates intracellular CTP levels through interactions with the four ribonucleotide triphosphates. This chain is CTP synthase, found in Burkholderia lata (strain ATCC 17760 / DSM 23089 / LMG 22485 / NCIMB 9086 / R18194 / 383).